The following is a 501-amino-acid chain: Probable Xaa-Pro aminopeptidase pepP (501 aa).

The tract at residues 1 to 25 is disordered; it reads MNYHSFLPLRRSSLSHSTTPPSKSR. Positions 12–25 are enriched in polar residues; the sequence is SSLSHSTTPPSKSR. Aspartate 298, aspartate 309, glutamate 432, and glutamate 472 together coordinate Mn(2+).

It belongs to the peptidase M24B family. Requires Mn(2+) as cofactor.

It carries out the reaction Release of any N-terminal amino acid, including proline, that is linked to proline, even from a dipeptide or tripeptide.. In terms of biological role, catalyzes the removal of a penultimate prolyl residue from the N-termini of peptides. This chain is Probable Xaa-Pro aminopeptidase pepP (pepP), found in Metarhizium acridum (strain CQMa 102).